The following is a 305-amino-acid chain: Translation initiation factor eIF2B subunit alpha (305 aa).

It belongs to the eIF-2B alpha/beta/delta subunits family. As to quaternary structure, component of the translation initiation factor 2B (eIF2B) complex which is a heterodecamer of two sets of five different subunits: alpha, beta, gamma, delta and epsilon. Subunits alpha, beta and delta comprise a regulatory subcomplex and subunits epsilon and gamma comprise a catalytic subcomplex. Within the complex, the hexameric regulatory complex resides at the center, with the two heterodimeric catalytic subcomplexes bound on opposite sides.

The protein localises to the cytoplasm. The protein resides in the cytosol. Its activity is regulated as follows. Activated by the chemical integrated stress response (ISR) inhibitor ISRIB which stimulates guanine nucleotide exchange factor activity for both phosphorylated and unphosphorylated eIF2. In terms of biological role, acts as a component of the translation initiation factor 2B (eIF2B) complex, which catalyzes the exchange of GDP for GTP on eukaryotic initiation factor 2 (eIF2) gamma subunit. Its guanine nucleotide exchange factor activity is repressed when bound to eIF2 complex phosphorylated on the alpha subunit, thereby limiting the amount of methionyl-initiator methionine tRNA available to the ribosome and consequently global translation is repressed. The sequence is that of Translation initiation factor eIF2B subunit alpha (EIF2B1) from Bos taurus (Bovine).